An 805-amino-acid chain; its full sequence is Probable inorganic carbon transporter subunit DabA (805 aa).

The Zn(2+) site is built by Cys-334, Asp-336, His-491, and Cys-506.

This sequence belongs to the inorganic carbon transporter (TC 9.A.2) DabA family. As to quaternary structure, forms a complex with DabB. Zn(2+) serves as cofactor.

It is found in the cell inner membrane. Its function is as follows. Part of an energy-coupled inorganic carbon pump. The protein is Probable inorganic carbon transporter subunit DabA of Ruegeria sp. (strain TM1040) (Silicibacter sp.).